A 369-amino-acid chain; its full sequence is Protein FAM187B (369 aa).

Residues 1–17 form the signal peptide; that stretch reads MPPMLWLLLHFAAPALG. The Extracellular portion of the chain corresponds to 18 to 335; sequence FYFSISCPSG…RADSVLKGLK (318 aa). N-linked (GlcNAc...) asparagine glycans are attached at residues asparagine 45, asparagine 68, and asparagine 130. A helical membrane pass occupies residues 336–356; sequence LVLLVVTVLALLGALLKCIHP. Residues 357–369 lie on the Cytoplasmic side of the membrane; sequence SPGRRSTQVLVVK.

It belongs to the FAM187 family.

The protein resides in the membrane. The protein is Protein FAM187B (FAM187B) of Homo sapiens (Human).